We begin with the raw amino-acid sequence, 215 residues long: Cytochrome c biogenesis ATP-binding export protein CcmA (215 aa).

Residues 8-215 enclose the ABC transporter domain; that stretch reads LQATALACER…RDLDLGQWSA (208 aa). 40 to 47 lines the ATP pocket; it reads GPNGCGKT.

Belongs to the ABC transporter superfamily. CcmA exporter (TC 3.A.1.107) family. As to quaternary structure, the complex is composed of two ATP-binding proteins (CcmA) and two transmembrane proteins (CcmB).

Its subcellular location is the cell inner membrane. It catalyses the reaction heme b(in) + ATP + H2O = heme b(out) + ADP + phosphate + H(+). Part of the ABC transporter complex CcmAB involved in the biogenesis of c-type cytochromes; once thought to export heme, this seems not to be the case, but its exact role is uncertain. Responsible for energy coupling to the transport system. In Pseudomonas syringae pv. syringae (strain B728a), this protein is Cytochrome c biogenesis ATP-binding export protein CcmA.